The sequence spans 464 residues: Argininosuccinate lyase (464 aa).

Position 2 is an N-acetylalanine (A2). Residue K7 is modified to N6-acetyllysine. S27 contacts 2-(N(omega)-L-arginino)succinate. Position 69 is an N6-acetyllysine (K69). 2-(N(omega)-L-arginino)succinate is bound by residues N114 and T159. Residue H160 is the Proton acceptor of the active site. S281 (proton donor) is an active-site residue. The residue at position 288 (K288) is an N6-acetyllysine. 4 residues coordinate 2-(N(omega)-L-arginino)succinate: N289, Y321, Q326, and K329.

The protein belongs to the lyase 1 family. Argininosuccinate lyase subfamily. Homotetramer. Forms tissue-specific complexes with ASS1, SLC7A1, HSP90AA1 and nitric oxide synthase NOS1, NOS2 or NOS3; the complex maintenance is independent of ASL catalytic function. Acetylation modifies enzyme activity in response to alterations of extracellular nutrient availability. Acetylation increased with trichostin A (TSA) or with nicotinamide (NAM). Glucose increases acetylation by about a factor of 3 with decreasing enzyme activity. Acetylation on Lys-288 is decreased on the addition of extra amino acids resulting in activation of enzyme activity. As to expression, expressed in lung and brain (at protein level).

It catalyses the reaction 2-(N(omega)-L-arginino)succinate = fumarate + L-arginine. Its pathway is amino-acid biosynthesis; L-arginine biosynthesis; L-arginine from L-ornithine and carbamoyl phosphate: step 3/3. It functions in the pathway nitrogen metabolism; urea cycle; L-arginine and fumarate from (N(omega)-L-arginino)succinate: step 1/1. With respect to regulation, enzyme activity is regulated by acetylation. Functionally, catalyzes the reversible cleavage of L-argininosuccinate to fumarate and L-arginine, an intermediate step reaction in the urea cycle mostly providing for hepatic nitrogen detoxification into excretable urea as well as de novo L-arginine synthesis in nonhepatic tissues. Essential regulator of intracellular and extracellular L-arginine pools. As part of citrulline-nitric oxide cycle, forms tissue-specific multiprotein complexes with argininosuccinate synthase ASS1, transport protein SLC7A1 and nitric oxide synthase NOS1, NOS2 or NOS3, allowing for cell-autonomous L-arginine synthesis while channeling extracellular L-arginine to nitric oxide synthesis pathway. In Mus musculus (Mouse), this protein is Argininosuccinate lyase (Asl).